Consider the following 94-residue polypeptide: Integration host factor subunit beta (94 aa).

The protein belongs to the bacterial histone-like protein family. In terms of assembly, heterodimer of an alpha and a beta chain.

This protein is one of the two subunits of integration host factor, a specific DNA-binding protein that functions in genetic recombination as well as in transcriptional and translational control. This Haemophilus influenzae (strain ATCC 51907 / DSM 11121 / KW20 / Rd) protein is Integration host factor subunit beta (ihfB).